A 287-amino-acid chain; its full sequence is UPF0354 protein SSP1020 (287 aa).

This sequence belongs to the UPF0354 family.

The protein is UPF0354 protein SSP1020 of Staphylococcus saprophyticus subsp. saprophyticus (strain ATCC 15305 / DSM 20229 / NCIMB 8711 / NCTC 7292 / S-41).